The chain runs to 542 residues: CTP synthase (542 aa).

Residues 1-265 (MARYIFITGG…DDEVLAAFGL (265 aa)) form an amidoligase domain region. Serine 13 lines the CTP pocket. Serine 13 is a binding site for UTP. Position 14-19 (14-19 (SLGKGL)) interacts with ATP. Position 54 (tyrosine 54) interacts with L-glutamine. Aspartate 71 serves as a coordination point for ATP. Mg(2+)-binding residues include aspartate 71 and glutamate 139. CTP is bound by residues 146–148 (DIE), 186–191 (KTKPTQ), and lysine 222. UTP contacts are provided by residues 186–191 (KTKPTQ) and lysine 222. Position 238 to 240 (238 to 240 (RDA)) interacts with ATP. The region spanning 290–541 (TIAIVGKYTG…IQAAVVQSRL (252 aa)) is the Glutamine amidotransferase type-1 domain. Residue glycine 352 participates in L-glutamine binding. Cysteine 379 (nucleophile; for glutamine hydrolysis) is an active-site residue. Residues 380 to 383 (FGMQ), glutamate 403, and arginine 469 contribute to the L-glutamine site. Active-site residues include histidine 514 and glutamate 516.

This sequence belongs to the CTP synthase family. As to quaternary structure, homotetramer.

It catalyses the reaction UTP + L-glutamine + ATP + H2O = CTP + L-glutamate + ADP + phosphate + 2 H(+). It carries out the reaction L-glutamine + H2O = L-glutamate + NH4(+). The enzyme catalyses UTP + NH4(+) + ATP = CTP + ADP + phosphate + 2 H(+). The protein operates within pyrimidine metabolism; CTP biosynthesis via de novo pathway; CTP from UDP: step 2/2. Its activity is regulated as follows. Allosterically activated by GTP, when glutamine is the substrate; GTP has no effect on the reaction when ammonia is the substrate. The allosteric effector GTP functions by stabilizing the protein conformation that binds the tetrahedral intermediate(s) formed during glutamine hydrolysis. Inhibited by the product CTP, via allosteric rather than competitive inhibition. Catalyzes the ATP-dependent amination of UTP to CTP with either L-glutamine or ammonia as the source of nitrogen. Regulates intracellular CTP levels through interactions with the four ribonucleotide triphosphates. The protein is CTP synthase of Nitrobacter hamburgensis (strain DSM 10229 / NCIMB 13809 / X14).